The following is a 203-amino-acid chain: GTP cyclohydrolase-2 (203 aa).

GTP is bound at residue 49-53 (RIHSE). Cys54, Cys65, and Cys67 together coordinate Zn(2+). GTP is bound by residues Gln70, 92–94 (EGR), and Thr114. Asp126 functions as the Proton acceptor in the catalytic mechanism. Arg128 (nucleophile) is an active-site residue. 2 residues coordinate GTP: Thr149 and Lys154.

Belongs to the GTP cyclohydrolase II family. The cofactor is Zn(2+).

The enzyme catalyses GTP + 4 H2O = 2,5-diamino-6-hydroxy-4-(5-phosphoribosylamino)-pyrimidine + formate + 2 phosphate + 3 H(+). It participates in cofactor biosynthesis; riboflavin biosynthesis; 5-amino-6-(D-ribitylamino)uracil from GTP: step 1/4. In terms of biological role, catalyzes the conversion of GTP to 2,5-diamino-6-ribosylamino-4(3H)-pyrimidinone 5'-phosphate (DARP), formate and pyrophosphate. This Shewanella sp. (strain W3-18-1) protein is GTP cyclohydrolase-2.